Here is a 58-residue protein sequence, read N- to C-terminus: Small ribosomal subunit protein bS21 (58 aa).

Basic and acidic residues predominate over residues 32-42; that stretch reads ARRREHYEKPS. Residues 32–58 form a disordered region; sequence ARRREHYEKPSVRRKKKSEAARKRRWH. Residues 43-58 show a composition bias toward basic residues; the sequence is VRRKKKSEAARKRRWH.

This sequence belongs to the bacterial ribosomal protein bS21 family.

The sequence is that of Small ribosomal subunit protein bS21 from Moorella thermoacetica (strain ATCC 39073 / JCM 9320).